The sequence spans 439 residues: Probable tRNA pseudouridine synthase D (439 aa).

Aspartate 87 functions as the Nucleophile in the catalytic mechanism. The region spanning 166 to 391 is the TRUD domain; the sequence is GVPNFFGIQR…SKGLRREILL (226 aa).

It belongs to the pseudouridine synthase TruD family.

It catalyses the reaction uridine(13) in tRNA = pseudouridine(13) in tRNA. Could be responsible for synthesis of pseudouridine from uracil-13 in transfer RNAs. This Methanococcoides burtonii (strain DSM 6242 / NBRC 107633 / OCM 468 / ACE-M) protein is Probable tRNA pseudouridine synthase D.